The chain runs to 251 residues: Protein PBMUCL2 (251 aa).

The signal sequence occupies residues 1–22; sequence MPRYVPLLLLLLLLRCSERGGG. Disordered stretches follow at residues 36 to 55 and 65 to 251; these read WRDG…DRAS and LSQS…THLL. Positions 72-87 are enriched in basic and acidic residues; the sequence is KHPETSPKDSRIREND. The N-linked (GlcNAc...) asparagine glycan is linked to Asn120. Residues 150–164 are compositionally biased toward polar residues; the sequence is TKDSVTADPGTTENF. Residues 153-251 form a 15 X 11 AA approximate repeats region; sequence SVTADPGTTE…TTKHGDTHLL (99 aa). The span at 241–251 shows a compositional bias: basic and acidic residues; the sequence is ETTKHGDTHLL.

As to expression, detected in the brain, lung, spleen, thymus and prostate.

The protein localises to the secreted. The protein is Protein PBMUCL2 (HCG22) of Homo sapiens (Human).